We begin with the raw amino-acid sequence, 198 residues long: Holliday junction branch migration complex subunit RuvA (198 aa).

The tract at residues 1-64 (MYEYIKGEYM…EDFIGLYGFE (64 aa)) is domain I. The tract at residues 65–143 (SLEELEMFKM…TDELLNCIDE (79 aa)) is domain II. The flexible linker stretch occupies residues 144 to 154 (FDDVTQDNSLA). A domain III region spans residues 154-198 (AVSEALSALISLGYTEKEAEKVLRDVDKSESVENIIKSALVKLMG).

It belongs to the RuvA family. As to quaternary structure, homotetramer. Forms an RuvA(8)-RuvB(12)-Holliday junction (HJ) complex. HJ DNA is sandwiched between 2 RuvA tetramers; dsDNA enters through RuvA and exits via RuvB. An RuvB hexamer assembles on each DNA strand where it exits the tetramer. Each RuvB hexamer is contacted by two RuvA subunits (via domain III) on 2 adjacent RuvB subunits; this complex drives branch migration. In the full resolvosome a probable DNA-RuvA(4)-RuvB(12)-RuvC(2) complex forms which resolves the HJ.

The protein localises to the cytoplasm. In terms of biological role, the RuvA-RuvB-RuvC complex processes Holliday junction (HJ) DNA during genetic recombination and DNA repair, while the RuvA-RuvB complex plays an important role in the rescue of blocked DNA replication forks via replication fork reversal (RFR). RuvA specifically binds to HJ cruciform DNA, conferring on it an open structure. The RuvB hexamer acts as an ATP-dependent pump, pulling dsDNA into and through the RuvAB complex. HJ branch migration allows RuvC to scan DNA until it finds its consensus sequence, where it cleaves and resolves the cruciform DNA. In Clostridium botulinum (strain Eklund 17B / Type B), this protein is Holliday junction branch migration complex subunit RuvA.